We begin with the raw amino-acid sequence, 677 residues long: Methionine--tRNA ligase (677 aa).

The short motif at Pro15–His25 is the 'HIGH' region element. Residues Cys146, Cys149, Cys159, and Cys162 each contribute to the Zn(2+) site. The 'KMSKS' region signature appears at Lys333–Ser337. Lys336 lines the ATP pocket. Residues Asp575–Lys677 form the tRNA-binding domain.

The protein belongs to the class-I aminoacyl-tRNA synthetase family. MetG type 1 subfamily. Homodimer. Zn(2+) serves as cofactor.

The protein resides in the cytoplasm. The catalysed reaction is tRNA(Met) + L-methionine + ATP = L-methionyl-tRNA(Met) + AMP + diphosphate. In terms of biological role, is required not only for elongation of protein synthesis but also for the initiation of all mRNA translation through initiator tRNA(fMet) aminoacylation. The sequence is that of Methionine--tRNA ligase from Salmonella paratyphi A (strain AKU_12601).